The sequence spans 150 residues: D-aminoacyl-tRNA deacylase (150 aa).

Positions 137-138 match the Gly-cisPro motif, important for rejection of L-amino acids motif; sequence GP.

This sequence belongs to the DTD family. Homodimer.

It is found in the cytoplasm. It carries out the reaction glycyl-tRNA(Ala) + H2O = tRNA(Ala) + glycine + H(+). It catalyses the reaction a D-aminoacyl-tRNA + H2O = a tRNA + a D-alpha-amino acid + H(+). Its function is as follows. An aminoacyl-tRNA editing enzyme that deacylates mischarged D-aminoacyl-tRNAs. Also deacylates mischarged glycyl-tRNA(Ala), protecting cells against glycine mischarging by AlaRS. Acts via tRNA-based rather than protein-based catalysis; rejects L-amino acids rather than detecting D-amino acids in the active site. By recycling D-aminoacyl-tRNA to D-amino acids and free tRNA molecules, this enzyme counteracts the toxicity associated with the formation of D-aminoacyl-tRNA entities in vivo and helps enforce protein L-homochirality. This is D-aminoacyl-tRNA deacylase from Alkalilimnicola ehrlichii (strain ATCC BAA-1101 / DSM 17681 / MLHE-1).